A 411-amino-acid polypeptide reads, in one-letter code: Thyroid hormone receptor beta (411 aa).

The tract at residues 1–24 (MTPNSMTENGLPAWDKPKPCPDGE) is disordered. Positions 1–104 (MTPNSMTENG…IPSYLDKDEL (104 aa)) are modulating. Residues 15–24 (DKPKPCPDGE) show a composition bias toward basic and acidic residues. Zn(2+) contacts are provided by Cys-105, Cys-108, Cys-122, Cys-125, Cys-143, Cys-149, Cys-159, and Cys-162. 2 consecutive NR C4-type zinc fingers follow at residues 105–125 (CVVCGDKATGYHYRCITCEGC) and 143–167 (CKYEGKCVIDKVTRNQCQECRFKKC). Residues 105-179 (CVVCGDKATG…VGMATDLVLD (75 aa)) constitute a DNA-binding region (nuclear receptor). The NR LBD domain occupies 215 to 411 (QEWELIKTVT…EHYINYRRNS (197 aa)). Positions 242–411 (KFLPEDIGQA…EHYINYRRNS (170 aa)) are interaction with NR2F6. Arg-280 and Asn-329 together coordinate 3,3',5-triiodo-L-thyronine. L-thyroxine-binding residues include Arg-280 and Asn-329.

This sequence belongs to the nuclear hormone receptor family. NR1 subfamily. In terms of assembly, binds DNA as a dimer; homodimer and heterodimer with RXRA. Interacts with the coactivators NCOA1/SRC1, NCOA2/GRIP1, NCOA7 and MED1/TRAP220 in a ligand-inducible manner. Interacts with the corepressor NCOR1 in absence of ligand. Interacts with C1D. Interacts with NR2F6; the interaction impairs the binding of the THRB homodimer and THRB:RXRB heterodimer to T3 response elements. Interacts with PRMT2 and THRSP. Interacts with TACC1; this interaction is decreased in the presence of thyroid hormone T3.

The protein resides in the nucleus. Functionally, nuclear hormone receptor that can act as a repressor or activator of transcription. High affinity receptor for thyroid hormones, including triiodothyronine and thyroxine. In Ovis aries (Sheep), this protein is Thyroid hormone receptor beta (THRB).